Here is a 173-residue protein sequence, read N- to C-terminus: MKTMLILALIALAATSVVAQLDTTCSQGYGQCQQQPQQQVNTCSALLQQCSPTPYVQSQMWQASGCQLMRQQCCQPLAQISEQARCHAVCGVAQVIMRQQQGQSFGQPQQQQGQSFSQPQQQVPIEIRRMVLQTLPSMCNVNIPQYCTTTPCSTITQTPYNVPMATTCVGGTC.

A signal peptide spans 1 to 19 (MKTMLILALIALAATSVVA).

The protein belongs to the prolamin family. Post-translationally, contains 7 disulfide bonds.

Seed storage protein. Not integrated in the gluten polymer through disulfide bonds, unless incorporated by reduction and reoxidation during dough making. Increases dough strength and bread volume, but decreases dough stability when added into a base wheat flour. The protein is Avenin-like a5 of Triticum aestivum (Wheat).